A 173-amino-acid polypeptide reads, in one-letter code: MARVEL domain-containing protein 1 (173 aa).

Met1 carries the post-translational modification N-acetylmethionine. Over 1 to 29 (MLPPPPRQPPPQARAARGAVRLQRPFLRS) the chain is Cytoplasmic. An MARVEL domain is found at 26-166 (FLRSPLGVLR…SALYGCGRRC (141 aa)). Residues 30–50 (PLGVLRLLQLLAGAAFWITIA) traverse the membrane as a helical segment. At 51–59 (TSKYQGPVH) the chain is on the extracellular side. The helical transmembrane segment at 60–80 (FALFVSVLFWLLTLGLYFLTL) threads the bilayer. At 81 to 94 (LGKHELVPVLGSRW) the chain is on the cytoplasmic side. A helical membrane pass occupies residues 95-115 (LMVNVAHDVLAAALYGAATGI). Over 116–138 (MSDQMQRHSYCNLKDYPLPCAYH) the chain is Extracellular. Residues 139–159 (AFLAAAVCGGVCHGLYLLSAL) traverse the membrane as a helical segment. Residues 160–173 (YGCGRRCQGKQEVA) lie on the Cytoplasmic side of the membrane.

Widely expressed in normal tissues. Down-regulated in multiple primary tumors.

It localises to the cell membrane. It is found in the cytoplasm. The protein resides in the cytoskeleton. Its subcellular location is the nucleus. Its function is as follows. Microtubule-associated protein that exhibits cell cycle-dependent localization and can inhibit cell proliferation and migration. The chain is MARVEL domain-containing protein 1 (MARVELD1) from Homo sapiens (Human).